The chain runs to 399 residues: Glucose-1-phosphate adenylyltransferase (399 aa).

Residues G158, 174 to 175, and S192 each bind alpha-D-glucose 1-phosphate; that span reads EK.

The protein belongs to the bacterial/plant glucose-1-phosphate adenylyltransferase family. Homotetramer.

It catalyses the reaction alpha-D-glucose 1-phosphate + ATP + H(+) = ADP-alpha-D-glucose + diphosphate. It participates in glycan biosynthesis; glycogen biosynthesis. In terms of biological role, involved in the biosynthesis of ADP-glucose, a building block required for the elongation reactions to produce glycogen. Catalyzes the reaction between ATP and alpha-D-glucose 1-phosphate (G1P) to produce pyrophosphate and ADP-Glc. In Streptomyces coelicolor (strain ATCC BAA-471 / A3(2) / M145), this protein is Glucose-1-phosphate adenylyltransferase.